A 316-amino-acid chain; its full sequence is Cell division protein ZipA (316 aa).

The Periplasmic segment spans residues 1-5 (MQELR). Residues 6–26 (FVLIVVGALAIAALLFHGLWS) traverse the membrane as a helical segment. The Cytoplasmic portion of the chain corresponds to 27–316 (SKKEGKAKFG…QIVEFNAANA (290 aa)). The segment at 36–65 (GNKPLGKLDVDQGDKDSVEQERSFAPATED) is disordered. Basic and acidic residues predominate over residues 41–57 (GKLDVDQGDKDSVEQER).

The protein belongs to the ZipA family. Interacts with FtsZ via their C-terminal domains.

It localises to the cell inner membrane. Its function is as follows. Essential cell division protein that stabilizes the FtsZ protofilaments by cross-linking them and that serves as a cytoplasmic membrane anchor for the Z ring. Also required for the recruitment to the septal ring of downstream cell division proteins. The sequence is that of Cell division protein ZipA from Vibrio parahaemolyticus serotype O3:K6 (strain RIMD 2210633).